Reading from the N-terminus, the 464-residue chain is Properdin (464 aa).

The first 22 residues, 1 to 22, serve as a signal peptide directing secretion; sequence MPAEMQAPQWLLLLLVILPATG. 7 consecutive TSP type-1 domains span residues 24–72, 73–130, 132–187, 189–251, 253–309, 311–372, and 374–457; these read DPVL…QACR, SPQW…PCCP, MGGW…KTCP, HGAW…PPCP, AGGW…VPCP, NGEW…HNCI, and KGSW…PVCK. Disulfide bonds link Cys28–Cys52, Cys39–Cys68, and Cys53–Cys71. Residues Trp79 and Trp82 are each glycosylated (C-linked (Man) tryptophan). 7 disulfide bridges follow: Cys85/Cys123, Cys89/Cys129, Cys100/Cys107, Cys128/Cys166, Cys144/Cys180, Cys148/Cys186, and Cys159/Cys170. Trp135, Trp138, and Trp141 each carry a C-linked (Man) tryptophan glycan. A glycan (O-linked (Fuc...) threonine) is linked at Thr147. C-linked (Man) tryptophan glycosylation is found at Trp192, Trp195, and Trp198. Intrachain disulfides connect Cys201–Cys244, Cys205–Cys250, and Cys220–Cys234. O-linked (Fuc...) serine glycosylation occurs at Ser204. Trp256 and Trp259 each carry a C-linked (Man) tryptophan glycan. 3 cysteine pairs are disulfide-bonded: Cys265-Cys302, Cys269-Cys308, and Cys280-Cys292. A glycan (O-linked (Fuc...) threonine) is linked at Thr268. C-linked (Man) tryptophan glycans are attached at residues Trp317 and Trp320. 3 disulfides stabilise this stretch: Cys323/Cys365, Cys332/Cys371, and Cys345/Cys355. The segment at 346–354 is interaction with Complement C3 beta chain; that stretch reads GGRKFNGKP. C-linked (Man) tryptophan glycans are attached at residues Trp377, Trp380, and Trp383. 3 disulfide bridges follow: Cys386–Cys450, Cys390–Cys456, and Cys402–Cys434. An N-linked (GlcNAc...) asparagine glycan is attached at Asn423.

In terms of assembly, in plasma, properdin exists as dimers, trimers or tetramers in the relative proportions of 26:54:20. Interacts with the pro-C3-convertase enzyme complex (C3b-Bb) comprised of Complement C3 beta chain (C3b) and the Complement factor B Bb fragment (Bb), where it binds (via its TSP type-1 5 domain) with C3b and Bb. This interaction stabilizes the complex and allows it to become the active C3-convertase enzyme complex (C3b-Bb-FP). Interacts with C3b. Interacts with CFB.

It is found in the secreted. Functionally, a positive regulator of the alternate pathway of complement. It binds to and stabilizes the C3- and C5-convertase enzyme complexes. Inhibits CFI-CFH mediated degradation of Inhibits CFI-CFH mediated degradation of Complement C3 beta chain (C3b). In Mus musculus (Mouse), this protein is Properdin (Cfp).